Consider the following 221-residue polypeptide: Phosphoenolpyruvate guanylyltransferase (221 aa).

Phosphoenolpyruvate is bound by residues Thr-154, Gly-169, and Ser-172.

Belongs to the CofC family.

The enzyme catalyses phosphoenolpyruvate + GTP + H(+) = enolpyruvoyl-2-diphospho-5'-guanosine + diphosphate. It functions in the pathway cofactor biosynthesis; coenzyme F420 biosynthesis. Functionally, guanylyltransferase that catalyzes the activation of phosphoenolpyruvate (PEP) as enolpyruvoyl-2-diphospho-5'-guanosine, via the condensation of PEP with GTP. It is involved in the biosynthesis of coenzyme F420, a hydride carrier cofactor. This is Phosphoenolpyruvate guanylyltransferase from Mycolicibacterium smegmatis (strain ATCC 700084 / mc(2)155) (Mycobacterium smegmatis).